A 343-amino-acid chain; its full sequence is N-acetyl-gamma-glutamyl-phosphate reductase (343 aa).

Residue cysteine 148 is part of the active site.

Belongs to the NAGSA dehydrogenase family. Type 1 subfamily.

Its subcellular location is the cytoplasm. It catalyses the reaction N-acetyl-L-glutamate 5-semialdehyde + phosphate + NADP(+) = N-acetyl-L-glutamyl 5-phosphate + NADPH + H(+). The protein operates within amino-acid biosynthesis; L-arginine biosynthesis; N(2)-acetyl-L-ornithine from L-glutamate: step 3/4. Catalyzes the NADPH-dependent reduction of N-acetyl-5-glutamyl phosphate to yield N-acetyl-L-glutamate 5-semialdehyde. The chain is N-acetyl-gamma-glutamyl-phosphate reductase from Caldicellulosiruptor saccharolyticus (strain ATCC 43494 / DSM 8903 / Tp8T 6331).